We begin with the raw amino-acid sequence, 186 residues long: Protein FAM9B (186 aa).

The disordered stretch occupies residues 1–93; it reads MAAWGKKHAG…KHALRKKQLK (93 aa). Composition is skewed to basic and acidic residues over residues 10-27 and 34-58; these read GKDP…FTET and DEHG…KPED. Basic residues predominate over residues 66–93; it reads KRKRMKMDKTCSKTKNKSKHALRKKQLK.

This sequence belongs to the XLR/SYCP3 family. As to expression, expressed in testis and ovary (at protein level).

It localises to the nucleus. It is found in the cytoplasm. The protein resides in the chromosome. May play a role in meiosis. The polypeptide is Protein FAM9B (Homo sapiens (Human)).